Reading from the N-terminus, the 498-residue chain is ATP synthase subunit beta, chloroplastic (498 aa).

172 to 179 (GGAGVGKT) is a binding site for ATP.

Belongs to the ATPase alpha/beta chains family. F-type ATPases have 2 components, CF(1) - the catalytic core - and CF(0) - the membrane proton channel. CF(1) has five subunits: alpha(3), beta(3), gamma(1), delta(1), epsilon(1). CF(0) has four main subunits: a(1), b(1), b'(1) and c(9-12).

The protein localises to the plastid. It is found in the chloroplast thylakoid membrane. It catalyses the reaction ATP + H2O + 4 H(+)(in) = ADP + phosphate + 5 H(+)(out). Produces ATP from ADP in the presence of a proton gradient across the membrane. The catalytic sites are hosted primarily by the beta subunits. This Hyophorbe lagenicaulis (Bottle palm) protein is ATP synthase subunit beta, chloroplastic.